A 337-amino-acid chain; its full sequence is 2-oxoglutarate receptor 1 (337 aa).

Residues 1-34 are Extracellular-facing; it reads MNEPLDYLANASDFPDYAAAFGNCTDENIPLKMH. 2 N-linked (GlcNAc...) asparagine glycosylation sites follow: N10 and N23. A helical transmembrane segment spans residues 35-55; that stretch reads YLPVIYGIIFLVGFPGNAVVI. The Cytoplasmic segment spans residues 56-69; it reads STYIFKMRPWKSST. Residues 70 to 90 form a helical membrane-spanning segment; it reads IIMLNLACTDLLYLTSLPFLI. The Extracellular segment spans residues 91 to 116; it reads HYYASGENWIFGDFMCKFIRFSFHFN. C106 and C183 are joined by a disulfide. Residues 117-137 form a helical membrane-spanning segment; it reads LYSSILFLTCFSIFRYCVIIH. The Cytoplasmic portion of the chain corresponds to 138–151; sequence PMSCFSIHKTRCAV. Residues 152 to 172 form a helical membrane-spanning segment; that stretch reads VACAVVWIISLVAVIPMTFLI. Topologically, residues 173 to 201 are extracellular; that stretch reads TSTNRTNRSACLDLTSSDELNTIKWYNLI. N176 and N179 each carry an N-linked (GlcNAc...) asparagine glycan. The helical transmembrane segment at 202-222 threads the bilayer; the sequence is LTATTFCLPLVIVTLCYTTII. The Cytoplasmic segment spans residues 223 to 242; sequence HTLTHGLQTDSCLKQKARRL. Residues 243–263 form a helical membrane-spanning segment; it reads TILLLLAFYVCFLPFHILRVI. Residues 264–284 lie on the Extracellular side of the membrane; sequence RIESRLLSISCSIENQIHEAY. A helical membrane pass occupies residues 285 to 305; sequence IVSRPLAALNTFGNLLLYVVV. The Cytoplasmic segment spans residues 306–337; it reads SDNFQQAVCSTVRCKVSGNLEQAKKISYSNNP.

This sequence belongs to the G-protein coupled receptor 1 family. As to expression, detected in kidney and, to a lower extent, in placenta. Not detected in brain tissues including the frontal cortex, caudate putamen, thalamus, hypothalamus, hippocampus or pons.

The protein resides in the cell membrane. In terms of biological role, g protein-coupled receptor for dicarboxylates and amino dicarboxylates. Receptor for itaconate, a metabolite produced by myeloid lineages. In the respiratory epithelium, couples the binding of itaconate to the activation of GNA11 and downstream intracellular Ca(2+) release, leading to mucocilliary clearance of airborne pathogens. Receptor for leukotriene E4 (LTE4) produced by mast cells upon allergic inflammation. Binds with high affinity to LTE4 and elicits mucin release from pulmonary epithelium in response to airborne fungi allergens. Regulates mucin-producing goblet cell homeostasis. Receptor for alpha-ketoglutarate produced by proximal tubule renal cells upon metabolic alkalosis. In an intrarenal paracrine signaling pathway, binds alpha-ketoglutarate and drives transepithelial salt reabsorption and bicarbonate secretion by SLC26A4/pendrin-positive intercalated cells. This is 2-oxoglutarate receptor 1 (OXGR1) from Homo sapiens (Human).